The chain runs to 460 residues: MVNHKLWGGRFEASLEDWVEEFGASIGFDYRLAPYDLQGSLAHVKMLGQTGIIAPEEAAAIQAGLEKLLVRYQAGELEFDVRNEDIHMNMEALLTEEIGPVAGKLHTARSRNDQVATDMHLYLKDQIGQIADKLLNLRQVLLNLAEEHVETIMPGYTHLQHAQPISFAHHLLAYYQMFSRDSQRFAFNLEHTNLSPLGAAALAGTTFSIDRELTADLLGFKGIYHNSLDAVSDRDFILEFLSNSSILIMHLSRLCEELINWCSYEYGFVSLSDTFSTGSSIMPQKKNPDMAELIRGKSGRVYGHLFSLLTVMKSLPLAYNKDLQEDKEGMFDTVDTIQKSLDIMAGMLSSMTVNKEKMLVSTQQDFSNATELADYLAKKGLPFREAHEIVGKLVLECSKAGYYLQDIPLSRYQEVSSLIEEDIYQALESQTAVQKRNSLGGTGFAQIRQELERAKRQLEK.

Belongs to the lyase 1 family. Argininosuccinate lyase subfamily.

The protein localises to the cytoplasm. The catalysed reaction is 2-(N(omega)-L-arginino)succinate = fumarate + L-arginine. It participates in amino-acid biosynthesis; L-arginine biosynthesis; L-arginine from L-ornithine and carbamoyl phosphate: step 3/3. In Streptococcus sanguinis (strain SK36), this protein is Argininosuccinate lyase.